The following is a 459-amino-acid chain: Cysteine--tRNA ligase (459 aa).

C27 serves as a coordination point for Zn(2+). Residues 29 to 39 (VTVYDDCHIGH) carry the 'HIGH' region motif. Residues C208, H233, and E237 each contribute to the Zn(2+) site. A 'KMSKS' region motif is present at residues 265-269 (KMSKS). Position 268 (K268) interacts with ATP.

This sequence belongs to the class-I aminoacyl-tRNA synthetase family. As to quaternary structure, monomer. Requires Zn(2+) as cofactor.

The protein localises to the cytoplasm. It catalyses the reaction tRNA(Cys) + L-cysteine + ATP = L-cysteinyl-tRNA(Cys) + AMP + diphosphate. This is Cysteine--tRNA ligase from Francisella tularensis subsp. novicida (strain U112).